Here is a 463-residue protein sequence, read N- to C-terminus: Heterogeneous nuclear ribonucleoprotein K (463 aa).

An N-acetylmethionine modification is found at methionine 1. The tract at residues 1–37 (METEQPEETFPNTETNGEFGKRPAEDMEEEQAFKRSR) is disordered. A necessary for interaction with DDX1 region spans residues 1–276 (METEQPEETF…GRGGRPMPPS (276 aa)). Over residues 19–37 (FGKRPAEDMEEEQAFKRSR) the composition is skewed to basic and acidic residues. Lysine 34 bears the N6-acetyllysine; alternate mark. Lysine 34 is covalently cross-linked (Glycyl lysine isopeptide (Lys-Gly) (interchain with G-Cter in SUMO1); alternate). Residue lysine 34 forms a Glycyl lysine isopeptide (Lys-Gly) (interchain with G-Cter in SUMO2); alternate linkage. Residues 35–197 (RSRNTDEMVE…STDRVVLIGG (163 aa)) form an interaction with ASFV p30 region. Phosphoserine is present on serine 36. Position 39 is a phosphothreonine (threonine 39). Positions 42 to 104 (MVELRILLQS…ETIGEILKKI (63 aa)) constitute a KH 1 domain. Glycyl lysine isopeptide (Lys-Gly) (interchain with G-Cter in SUMO2) cross-links involve residues lysine 52 and lysine 60. Repeat copies occupy residues 54 to 76 (AGAV…NASV) and 59 to 62 (GKGG). A 2 X 22 AA approximate repeats region spans residues 54-421 (AGAVIGKGGK…QIRHESGASI (368 aa)). Positions 59–407 (GKGGKNIKAL…LAGSIIGKGG (349 aa)) are 5 X 4 AA repeats of G-X-G-G. A phosphoserine mark is found at serine 75 and serine 116. The region spanning 144-209 (DCELRLLIHQ…DRVVECIKII (66 aa)) is the KH 2 domain. Lysine 163 participates in a covalent cross-link: Glycyl lysine isopeptide (Lys-Gly) (interchain with G-Cter in SUMO1); alternate. Residue lysine 163 forms a Glycyl lysine isopeptide (Lys-Gly) (interchain with G-Cter in SUMO2); alternate linkage. The residue at position 198 (lysine 198) is an N6-acetyllysine. Positions 209–337 (ILDLISESPI…RPGDRYDGMV (129 aa)) are interaction with ZIK1. A phosphoserine mark is found at serine 214 and serine 216. Lysine 219 is covalently cross-linked (Glycyl lysine isopeptide (Lys-Gly) (interchain with G-Cter in SUMO2); alternate). Lysine 219 bears the N6-succinyllysine; alternate mark. Positions 236–273 (YGGFTMMFDDRRGRPVGFPMRGRGGFDRMPPGRGGRPM) are RNA-binding RGG-box. Tandem repeats lie at residues 245–250 (DRRGRP), 257–260 (GRGG), and 267–270 (GRGG). The tract at residues 245–329 (DRRGRPVGFP…LMAYDRRGRP (85 aa)) is 2 X 6 AA approximate repeats. The interval 250-329 (PVGFPMRGRG…LMAYDRRGRP (80 aa)) is disordered. Over residues 252–266 (GFPMRGRGGFDRMPP) the composition is skewed to low complexity. The segment covering 276–285 (SRRDYDDMSP) has biased composition (basic and acidic residues). Serine 284 is modified (phosphoserine). One copy of the 3-4 repeat lies at 295–298 (GRGG). Residue arginine 316 is modified to Omega-N-methylarginine. One copy of the 2-2 repeat lies at 324–329 (DRRGRP). Arginine 377 is subject to Omega-N-methylarginine. Serine 379 carries the post-translational modification Phosphoserine. At tyrosine 380 the chain carries Phosphotyrosine. The region spanning 387-451 (IITTQVTIPK…DQIQNAQYLL (65 aa)) is the KH 3 domain. 2 consecutive repeat copies span residues 399–421 (AGSI…GASI) and 404–407 (GKGG). An N6-acetyllysine; alternate modification is found at lysine 405. A Glycyl lysine isopeptide (Lys-Gly) (interchain with G-Cter in SUMO2); alternate cross-link involves residue lysine 405. A Phosphoserine modification is found at serine 420. Lysine 422 is covalently cross-linked (Glycyl lysine isopeptide (Lys-Gly) (interchain with G-Cter in SUMO1); alternate). Lysine 422 participates in a covalent cross-link: Glycyl lysine isopeptide (Lys-Gly) (interchain with G-Cter in SUMO2); alternate. A Glycyl lysine isopeptide (Lys-Gly) (interchain with G-Cter in SUMO); alternate cross-link involves residue lysine 422.

Identified in the spliceosome C complex. Part of a transcription inhibitory ribonucleoprotein complex composed at least of the circular RNA circZNF827, ZNF827 and HNRNPL. Interacts with RBM42 and ZIK1. Interacts with BRDT. Interacts with ANKRD28. Interacts with ASFV p30 protein. Interacts with DDX1. Interacts with MDM2; this interaction leads to ubiquitination and proteasomal degradation. Interacts with p53/TP53. Interacts with IVNS1ABP (via BACK domain); the interaction is direct. Interacts with PPIA/CYPA. As to quaternary structure, (Microbial infection) Interacts with HCV core protein. In terms of processing, arg-296 and Arg-299 are dimethylated, probably to asymmetric dimethylarginine. Post-translationally, sumoylated by CBX4. Sumoylation is increased upon DNA damage, such as that produced by doxorubicin, etoposide, UV light and camptothecin, due to enhanced CBX4 phosphorylation by HIPK2 under these conditions. Ubiquitinated by MDM2. Doxorubicin treatment does not affect monoubiquitination, but slightly decreases HNRNPK poly-ubiquitination. In terms of processing, O-glycosylated (O-GlcNAcylated), in a cell cycle-dependent manner.

Its subcellular location is the cytoplasm. It localises to the nucleus. The protein localises to the nucleoplasm. The protein resides in the cell projection. It is found in the podosome. One of the major pre-mRNA-binding proteins. Binds tenaciously to poly(C) sequences. Likely to play a role in the nuclear metabolism of hnRNAs, particularly for pre-mRNAs that contain cytidine-rich sequences. Can also bind poly(C) single-stranded DNA. Plays an important role in p53/TP53 response to DNA damage, acting at the level of both transcription activation and repression. When sumoylated, acts as a transcriptional coactivator of p53/TP53, playing a role in p21/CDKN1A and 14-3-3 sigma/SFN induction. As far as transcription repression is concerned, acts by interacting with long intergenic RNA p21 (lincRNA-p21), a non-coding RNA induced by p53/TP53. This interaction is necessary for the induction of apoptosis, but not cell cycle arrest. As part of a ribonucleoprotein complex composed at least of ZNF827, HNRNPL and the circular RNA circZNF827 that nucleates the complex on chromatin, may negatively regulate the transcription of genes involved in neuronal differentiation. This chain is Heterogeneous nuclear ribonucleoprotein K (HNRNPK), found in Homo sapiens (Human).